A 463-amino-acid chain; its full sequence is ATP-dependent protease ATPase subunit HslU (463 aa).

ATP contacts are provided by residues I19, 61 to 66 (GVGKTE), D277, E341, and R413.

The protein belongs to the ClpX chaperone family. HslU subfamily. In terms of assembly, a double ring-shaped homohexamer of HslV is capped on each side by a ring-shaped HslU homohexamer. The assembly of the HslU/HslV complex is dependent on binding of ATP.

It is found in the cytoplasm. Functionally, ATPase subunit of a proteasome-like degradation complex; this subunit has chaperone activity. The binding of ATP and its subsequent hydrolysis by HslU are essential for unfolding of protein substrates subsequently hydrolyzed by HslV. HslU recognizes the N-terminal part of its protein substrates and unfolds these before they are guided to HslV for hydrolysis. This Bacillus cytotoxicus (strain DSM 22905 / CIP 110041 / 391-98 / NVH 391-98) protein is ATP-dependent protease ATPase subunit HslU.